A 134-amino-acid chain; its full sequence is Small ribosomal subunit protein uS11 (134 aa).

Positions 1-21 (MPPKSRQGAGRKVRRKEKKNV) are disordered. Positions 9 to 21 (AGRKVRRKEKKNV) are enriched in basic residues.

Belongs to the universal ribosomal protein uS11 family. In terms of assembly, part of the 30S ribosomal subunit. Interacts with proteins S7 and S18. Binds to IF-3.

Its function is as follows. Located on the platform of the 30S subunit, it bridges several disparate RNA helices of the 16S rRNA. Forms part of the Shine-Dalgarno cleft in the 70S ribosome. In Thermobifida fusca (strain YX), this protein is Small ribosomal subunit protein uS11.